The sequence spans 515 residues: Maturase K (515 aa).

The protein belongs to the intron maturase 2 family. MatK subfamily.

The protein resides in the plastid. It localises to the chloroplast. Its function is as follows. Usually encoded in the trnK tRNA gene intron. Probably assists in splicing its own and other chloroplast group II introns. The chain is Maturase K from Alpinia zerumbet (Shell ginger).